Reading from the N-terminus, the 388-residue chain is Succinate--CoA ligase [ADP-forming] subunit beta (388 aa).

In terms of domain architecture, ATP-grasp spans 9 to 236; the sequence is KKLFAEHGVP…VAAVDPLEQK (228 aa). Residues Lys-45, 52 to 54, Glu-91, Ser-94, and Glu-99 contribute to the ATP site; that span reads GRG. Residues Asn-191 and Asp-205 each contribute to the Mg(2+) site. Substrate-binding positions include Asn-256 and 318–320; that span reads GIT.

This sequence belongs to the succinate/malate CoA ligase beta subunit family. In terms of assembly, heterotetramer of two alpha and two beta subunits. It depends on Mg(2+) as a cofactor.

The catalysed reaction is succinate + ATP + CoA = succinyl-CoA + ADP + phosphate. It carries out the reaction GTP + succinate + CoA = succinyl-CoA + GDP + phosphate. Its pathway is carbohydrate metabolism; tricarboxylic acid cycle; succinate from succinyl-CoA (ligase route): step 1/1. Its function is as follows. Succinyl-CoA synthetase functions in the citric acid cycle (TCA), coupling the hydrolysis of succinyl-CoA to the synthesis of either ATP or GTP and thus represents the only step of substrate-level phosphorylation in the TCA. The beta subunit provides nucleotide specificity of the enzyme and binds the substrate succinate, while the binding sites for coenzyme A and phosphate are found in the alpha subunit. In Parafrankia sp. (strain EAN1pec), this protein is Succinate--CoA ligase [ADP-forming] subunit beta.